A 159-amino-acid polypeptide reads, in one-letter code: 2-C-methyl-D-erythritol 2,4-cyclodiphosphate synthase (159 aa).

The a divalent metal cation site is built by D10 and H12. 4-CDP-2-C-methyl-D-erythritol 2-phosphate is bound by residues 10–12 (DVH) and 36–37 (HS). H44 lines the a divalent metal cation pocket. 4-CDP-2-C-methyl-D-erythritol 2-phosphate contacts are provided by residues 58–60 (DIG), 63–67 (FPDTD), 102–108 (AQAPKMA), 134–137 (TTTE), F141, and R144.

The protein belongs to the IspF family. As to quaternary structure, homotrimer. A divalent metal cation serves as cofactor.

It carries out the reaction 4-CDP-2-C-methyl-D-erythritol 2-phosphate = 2-C-methyl-D-erythritol 2,4-cyclic diphosphate + CMP. It functions in the pathway isoprenoid biosynthesis; isopentenyl diphosphate biosynthesis via DXP pathway; isopentenyl diphosphate from 1-deoxy-D-xylulose 5-phosphate: step 4/6. Functionally, involved in the biosynthesis of isopentenyl diphosphate (IPP) and dimethylallyl diphosphate (DMAPP), two major building blocks of isoprenoid compounds. Catalyzes the conversion of 4-diphosphocytidyl-2-C-methyl-D-erythritol 2-phosphate (CDP-ME2P) to 2-C-methyl-D-erythritol 2,4-cyclodiphosphate (ME-CPP) with a corresponding release of cytidine 5-monophosphate (CMP). The chain is 2-C-methyl-D-erythritol 2,4-cyclodiphosphate synthase from Shewanella frigidimarina (strain NCIMB 400).